A 154-amino-acid polypeptide reads, in one-letter code: 3-hydroxyacyl-[acyl-carrier-protein] dehydratase FabZ (154 aa).

Histidine 54 is an active-site residue.

The protein belongs to the thioester dehydratase family. FabZ subfamily.

The protein resides in the cytoplasm. The enzyme catalyses a (3R)-hydroxyacyl-[ACP] = a (2E)-enoyl-[ACP] + H2O. Involved in unsaturated fatty acids biosynthesis. Catalyzes the dehydration of short chain beta-hydroxyacyl-ACPs and long chain saturated and unsaturated beta-hydroxyacyl-ACPs. The sequence is that of 3-hydroxyacyl-[acyl-carrier-protein] dehydratase FabZ from Chlamydia caviae (strain ATCC VR-813 / DSM 19441 / 03DC25 / GPIC) (Chlamydophila caviae).